A 579-amino-acid chain; its full sequence is Matrix metalloproteinase-C (579 aa).

Positions 1–17 are cleaved as a signal peptide; that stretch reads MRLIYVIAILLVSTCQA. Residues 18 to 129 constitute a propeptide, activation peptide; the sequence is GFFSSLVSRF…SRCGVTDAPL (112 aa). The segment at 32 to 51 is disordered; sequence NSSPSSSSSSSSFSNSRKPS. The segment covering 33 to 50 has biased composition (low complexity); the sequence is SSPSSSSSSSSFSNSRKP. Residues 120 to 127 carry the Cysteine switch motif; the sequence is SRCGVTDA. Zn(2+) is bound by residues Cys-122, His-200, Asp-202, His-215, and His-225. N-linked (GlcNAc...) asparagine glycosylation is present at Asn-231. His-254 is a binding site for Zn(2+). Glu-255 is a catalytic residue. Positions 258 and 264 each coordinate Zn(2+). Residues 307 to 394 are disordered; sequence SGRSSSGSDF…SSSGSSGGGC (88 aa). The span at 315–324 shows a compositional bias: gly residues; the sequence is DFGGSSGGGS. Positions 325-341 are enriched in low complexity; sequence RTTARPTTTTRSWFGRF. Residues 373–394 show a composition bias toward gly residues; sequence WGSGSGSSGRGGSSSGSSGGGC. Hemopexin repeat units follow at residues 395 to 437 and 438 to 490; these read PSHI…FPSA and PTPV…LGFS.

It belongs to the peptidase M10A family. Zn(2+) serves as cofactor.

The protein localises to the secreted. It is found in the extracellular space. Its subcellular location is the extracellular matrix. Inhibited by human TIMP1 and TIMP2 and the broad MMP inhibitors BB94 (Batimastat) and CT543. Metalloproteinase. The polypeptide is Matrix metalloproteinase-C (Caenorhabditis elegans).